Consider the following 178-residue polypeptide: Alkyl hydroperoxide reductase AhpD (178 aa).

The active-site Proton donor is cysteine 130. Cysteine 130 and cysteine 133 are disulfide-bonded. The active-site Cysteine sulfenic acid (-SOH) intermediate is cysteine 133.

It belongs to the AhpD family. In terms of assembly, homotrimer.

It carries out the reaction N(6)-[(R)-dihydrolipoyl]-L-lysyl-[lipoyl-carrier protein] + a hydroperoxide = N(6)-[(R)-lipoyl]-L-lysyl-[lipoyl-carrier protein] + an alcohol + H2O. Functionally, antioxidant protein with alkyl hydroperoxidase activity. Required for the reduction of the AhpC active site cysteine residues and for the regeneration of the AhpC enzyme activity. The chain is Alkyl hydroperoxide reductase AhpD from Mycolicibacterium paratuberculosis (strain ATCC BAA-968 / K-10) (Mycobacterium paratuberculosis).